Consider the following 298-residue polypeptide: Mitochondrial dicarboxylate transporter (298 aa).

Solcar repeat units follow at residues 11 to 95 (KNIK…LKEN), 103 to 195 (TNMA…FKNY), and 205 to 289 (SKNY…LKKH). Helical transmembrane passes span 17–37 (WWYG…LDLA), 58–76 (ILAN…AAVL), 105–126 (MAYL…GNFA), 170–189 (GWKP…VVTY), 211–231 (LTAS…ADVM), and 265–283 (WLPS…FFAI).

This sequence belongs to the mitochondrial carrier (TC 2.A.29) family. Homodimer. Binds to the TIM22 translocation complex during import.

The protein resides in the mitochondrion inner membrane. Its function is as follows. Mitochondrial dicarboxylic transporter catalyzing the exchange of dicarboxylic acids like malate and succinate for inorganic phosphate. Required for growth on ethanol and acetate. The polypeptide is Mitochondrial dicarboxylate transporter (DIC1) (Saccharomyces cerevisiae (strain ATCC 204508 / S288c) (Baker's yeast)).